Consider the following 274-residue polypeptide: Reaction center protein L chain (274 aa).

Over 2-32 (ALLSFERKYRVRGGTLIGGDLFDFWVGPYFV) the chain is Cytoplasmic. Residues 33-53 (GFFGVSAIFFIFLGVSLIGYA) form a helical membrane-spanning segment. The Periplasmic segment spans residues 54–83 (ASQGPTWDPFAISINPPDLKYGLGAAPLLE). Residues 84–111 (GGFWQAITVCALGAFISWMLREVEISRK) traverse the membrane as a helical segment. Over 112–115 (LGIG) the chain is Cytoplasmic. Residues 116-139 (WHVPLAFCVPIFMFCVLQVFRPLL) traverse the membrane as a helical segment. Topologically, residues 140–170 (LGSWGHAFPYGILSHLDWVNNFGYQYLNWHY) are periplasmic. (7R,8Z)-bacteriochlorophyll b is bound by residues His-154 and His-174. The chain crosses the membrane as a helical span at residues 171–198 (NPGHMSSVSFLFVNAMALGLHGGLILSV). His-191 provides a ligand contact to Fe cation. Residues 199 to 225 (ANPGDGDKVKTAEHENQYFRDVVGYSI) are Cytoplasmic-facing. Position 217 (Phe-217) interacts with a ubiquinone. Residues 226-249 (GALSIHRLGLFLASNIFLTGAFGT) form a helical membrane-spanning segment. Residue His-231 participates in Fe cation binding. The Periplasmic portion of the chain corresponds to 250–274 (IASGPFWTRGWPEWWGWWLDIPFWS).

Belongs to the reaction center PufL/M/PsbA/D family. In terms of assembly, reaction center is composed of four bacteriochlorophylls, two bacteriopheophytins, two ubiquinones, one iron, and three highly hydrophobic polypeptide chains (designated L, M, and H).

The protein resides in the cellular chromatophore membrane. In terms of biological role, the reaction center is a membrane-bound complex that mediates the initial photochemical event in the electron transfer process of photosynthesis. The chain is Reaction center protein L chain (pufL) from Blastochloris viridis (Rhodopseudomonas viridis).